Reading from the N-terminus, the 259-residue chain is Ubiquitin-conjugating enzyme E2 J2 (259 aa).

Residues 1–226 (MSNNSNKRAP…AGLPQANRHH (226 aa)) lie on the Cytoplasmic side of the membrane. The UBC core domain occupies 12–162 (TATQRLKQDY…DKVFCELFPE (151 aa)). C94 serves as the catalytic Glycyl thioester intermediate. A helical; Anchor for type IV membrane protein membrane pass occupies residues 227 to 247 (GLLGGALANLFVIVGFAAFAY). Residues 248–259 (TVKYVLRSIAQE) lie on the Lumenal side of the membrane.

The protein belongs to the ubiquitin-conjugating enzyme family. Interacts with murid herpesvirus 4 protein K3 (mK3).

The protein resides in the endoplasmic reticulum membrane. It catalyses the reaction S-ubiquitinyl-[E1 ubiquitin-activating enzyme]-L-cysteine + [E2 ubiquitin-conjugating enzyme]-L-cysteine = [E1 ubiquitin-activating enzyme]-L-cysteine + S-ubiquitinyl-[E2 ubiquitin-conjugating enzyme]-L-cysteine.. The protein operates within protein modification; protein ubiquitination. Functionally, catalyzes the covalent attachment of ubiquitin to other proteins. Seems to function in the selective degradation of misfolded membrane proteins from the endoplasmic reticulum (ERAD). In cooperation with the GATOR2 complex, catalyzes 'Lys-6'-linked ubiquitination of NPRL2. Its function is as follows. In case of infection by the murid herpesvirus 4, its association with the viral E3 ligase K3 mediates ubiquitination of host surface class I (MHC-I) H-2D(b)/H2-D1 and H-2K(b)/H2-K1 molecules before they exit the endoplasmic reticulum, leading to their degradation by the ERAD system, thus blocking the immune detection of virus-infected cells. The complex formed with the murid herpesvirus 4 protein K3 mediates ubiquitination of lysine, as well as serine and threonine residues present in the cytoplasmic tail of surface class I molecules and promotes ubiquitination of hydroxylated serine or threonine residues via ester bonds instead of the classical isopeptide linkage. The chain is Ubiquitin-conjugating enzyme E2 J2 (Ube2j2) from Mus musculus (Mouse).